The following is a 58-amino-acid chain: Small ribosomal subunit protein eS27 (58 aa).

The Zn(2+) site is built by Cys10, Cys13, Cys29, and Cys32. The segment at 10–32 (CPDCEHEQVIFDHPSTIVKCIIC) adopts a C4-type zinc-finger fold.

This sequence belongs to the eukaryotic ribosomal protein eS27 family. Part of the 30S ribosomal subunit. Requires Zn(2+) as cofactor.

The chain is Small ribosomal subunit protein eS27 from Archaeoglobus fulgidus (strain ATCC 49558 / DSM 4304 / JCM 9628 / NBRC 100126 / VC-16).